The chain runs to 775 residues: Polyribonucleotide nucleotidyltransferase (775 aa).

Mg(2+)-binding residues include aspartate 487 and aspartate 493. Positions 554-613 (PKVEVVDVPEEKAPLIIGPGGSTVKKIYDETGVKVWVGEQGKVYLFVFPGGDVEKAKQMI) constitute a KH domain. S1 motif domains follow at residues 623–693 (GAVY…IGIE) and 707–775 (GDVY…TDDV).

It belongs to the polyribonucleotide nucleotidyltransferase family. Mg(2+) serves as cofactor.

The protein localises to the cytoplasm. The catalysed reaction is RNA(n+1) + phosphate = RNA(n) + a ribonucleoside 5'-diphosphate. In terms of biological role, involved in mRNA degradation. Catalyzes the phosphorolysis of single-stranded polyribonucleotides processively in the 3'- to 5'-direction. The chain is Polyribonucleotide nucleotidyltransferase from Aquifex aeolicus (strain VF5).